Consider the following 319-residue polypeptide: GTP 3',8-cyclase (319 aa).

One can recognise a Radical SAM core domain in the interval 4 to 227; that stretch reads KHGRKINYLR…VETDKSSTAL (224 aa). GTP is bound at residue Arg13. Residues Cys20 and Cys24 each contribute to the [4Fe-4S] cluster site. S-adenosyl-L-methionine is bound at residue Tyr26. Cys27 is a binding site for [4Fe-4S] cluster. Residue Arg63 coordinates GTP. Gly67 serves as a coordination point for S-adenosyl-L-methionine. Thr94 serves as a coordination point for GTP. An S-adenosyl-L-methionine-binding site is contributed by Ser118. Position 155 (Lys155) interacts with GTP. Met189 serves as a coordination point for S-adenosyl-L-methionine. 2 residues coordinate [4Fe-4S] cluster: Cys249 and Cys252. 254-256 contacts GTP; the sequence is RVR. Cys266 provides a ligand contact to [4Fe-4S] cluster.

The protein belongs to the radical SAM superfamily. MoaA family. In terms of assembly, monomer and homodimer. [4Fe-4S] cluster serves as cofactor.

The catalysed reaction is GTP + AH2 + S-adenosyl-L-methionine = (8S)-3',8-cyclo-7,8-dihydroguanosine 5'-triphosphate + 5'-deoxyadenosine + L-methionine + A + H(+). It functions in the pathway cofactor biosynthesis; molybdopterin biosynthesis. Its function is as follows. Catalyzes the cyclization of GTP to (8S)-3',8-cyclo-7,8-dihydroguanosine 5'-triphosphate. In Clostridium botulinum (strain Langeland / NCTC 10281 / Type F), this protein is GTP 3',8-cyclase.